The primary structure comprises 236 residues: Purine nucleoside phosphorylase DeoD-type (236 aa).

His5 serves as a coordination point for a purine D-ribonucleoside. Residues Gly21, Arg25, Arg44, and 88–91 contribute to the phosphate site; that span reads RVGT. A purine D-ribonucleoside contacts are provided by residues 180–182 and 204–205; these read DME and SD. Residue Asp205 is the Proton donor of the active site.

This sequence belongs to the PNP/UDP phosphorylase family. In terms of assembly, homohexamer; trimer of homodimers.

The enzyme catalyses a purine D-ribonucleoside + phosphate = a purine nucleobase + alpha-D-ribose 1-phosphate. It carries out the reaction a purine 2'-deoxy-D-ribonucleoside + phosphate = a purine nucleobase + 2-deoxy-alpha-D-ribose 1-phosphate. Functionally, catalyzes the reversible phosphorolytic breakdown of the N-glycosidic bond in the beta-(deoxy)ribonucleoside molecules, with the formation of the corresponding free purine bases and pentose-1-phosphate. In Buchnera aphidicola subsp. Schizaphis graminum (strain Sg), this protein is Purine nucleoside phosphorylase DeoD-type.